Consider the following 181-residue polypeptide: HGPRTase-like protein 1 (181 aa).

This sequence belongs to the purine/pyrimidine phosphoribosyltransferase family. Archaeal HPRT subfamily.

May catalyze a purine salvage reaction, the substrate is unknown. The protein is HGPRTase-like protein 1 of Halalkalicoccus jeotgali (strain DSM 18796 / CECT 7217 / JCM 14584 / KCTC 4019 / B3).